We begin with the raw amino-acid sequence, 270 residues long: Regulatory protein RecX (270 aa).

It belongs to the RecX family.

Its subcellular location is the cytoplasm. Its function is as follows. Modulates RecA activity. In Bacillus cereus (strain AH187), this protein is Regulatory protein RecX.